The sequence spans 151 residues: Small ribosomal subunit protein uS19 (151 aa).

Residues 1-23 (MVVNKQGSVKSIKRKARKSRKVT) are disordered. Residues 11–23 (SIKRKARKSRKVT) are compositionally biased toward basic residues.

The protein belongs to the universal ribosomal protein uS19 family.

Its function is as follows. Protein S19 forms a complex with S13 that binds strongly to the 16S ribosomal RNA. The polypeptide is Small ribosomal subunit protein uS19 (rps19) (Thermoplasma volcanium (strain ATCC 51530 / DSM 4299 / JCM 9571 / NBRC 15438 / GSS1)).